Here is a 37-residue protein sequence, read N- to C-terminus: Large ribosomal subunit protein bL36c (37 aa).

The protein belongs to the bacterial ribosomal protein bL36 family.

It is found in the plastid. The protein resides in the organellar chromatophore. This chain is Large ribosomal subunit protein bL36c, found in Paulinella chromatophora.